We begin with the raw amino-acid sequence, 194 residues long: Lachesicidin (194 aa).

An N-terminal signal peptide occupies residues 1-22; it reads MQGFFWKTWLVLAVCGTPASLA. The propeptide occupies 23 to 160; it reads HRPLSYGEAL…DEEKDQPKRV (138 aa). Intrachain disulfides connect C79/C90 and C101/C118. Residues 125-154 are compositionally biased toward acidic residues; that stretch reads EEEEEEEEEEQKAEAENDEEVEKEKEDEEK. Residues 125–157 are disordered; that stretch reads EEEEEEEEEEQKAEAENDEEVEKEKEDEEKDQP.

Belongs to the cathelicidin family. Expressed by the venom gland.

The protein resides in the secreted. It is found in the target cell membrane. Functionally, potent antimicrobial peptide against Gram-negative and Gram-positive bacteria. Adopts an amphipathic alpha helical conformation, that may allow to partition into the target membrane. Low hemolytic activities have been observed on mammalian cells. In Lachesis muta rhombeata (Bushmaster), this protein is Lachesicidin.